A 165-amino-acid polypeptide reads, in one-letter code: Inorganic pyrophosphatase (165 aa).

Substrate is bound by residues lysine 21, arginine 35, and tyrosine 47. The Mg(2+) site is built by aspartate 57, aspartate 62, and aspartate 94. Tyrosine 131 is a substrate binding site.

This sequence belongs to the PPase family. As to quaternary structure, homohexamer. The cofactor is Mg(2+).

It is found in the cytoplasm. The catalysed reaction is diphosphate + H2O = 2 phosphate + H(+). Functionally, catalyzes the hydrolysis of inorganic pyrophosphate (PPi) forming two phosphate ions. The polypeptide is Inorganic pyrophosphatase (Geobacillus stearothermophilus (Bacillus stearothermophilus)).